We begin with the raw amino-acid sequence, 416 residues long: Probable sarcosine oxidase (416 aa).

Residue 10–40 (DVIVVGAGVMGSSAAYQLAKRGQKTLLLEQF) participates in FAD binding. The residue at position 325 (C325) is an S-8alpha-FAD cysteine.

The protein belongs to the MSOX/MTOX family. It depends on FAD as a cofactor.

The enzyme catalyses sarcosine + O2 + H2O = formaldehyde + glycine + H2O2. The sequence is that of Probable sarcosine oxidase from Arabidopsis thaliana (Mouse-ear cress).